Consider the following 199-residue polypeptide: uncharacterized protein (199 aa).

The chain crosses the membrane as a helical span at residues 21 to 38 (ISPSATNFIVSLVIMILI).

It is found in the membrane. This is an uncharacterized protein from Saccharomyces cerevisiae (strain ATCC 204508 / S288c) (Baker's yeast).